A 75-amino-acid chain; its full sequence is Small ribosomal subunit protein bS18 (75 aa).

Belongs to the bacterial ribosomal protein bS18 family. As to quaternary structure, part of the 30S ribosomal subunit. Forms a tight heterodimer with protein bS6.

Functionally, binds as a heterodimer with protein bS6 to the central domain of the 16S rRNA, where it helps stabilize the platform of the 30S subunit. This is Small ribosomal subunit protein bS18 from Histophilus somni (strain 129Pt) (Haemophilus somnus).